The sequence spans 369 residues: tRNA pseudouridine synthase D (369 aa).

Residue Asp80 is the Nucleophile of the active site. The TRUD domain maps to 156-318; the sequence is GIPNWFGEQR…LKQERRALRL (163 aa).

Belongs to the pseudouridine synthase TruD family.

It catalyses the reaction uridine(13) in tRNA = pseudouridine(13) in tRNA. In terms of biological role, responsible for synthesis of pseudouridine from uracil-13 in transfer RNAs. The sequence is that of tRNA pseudouridine synthase D from Xanthomonas axonopodis pv. citri (strain 306).